The primary structure comprises 425 residues: UDP-N-acetylglucosamine 1-carboxyvinyltransferase (425 aa).

25-26 (KN) contributes to the phosphoenolpyruvate binding site. Residue Arg95 participates in UDP-N-acetyl-alpha-D-glucosamine binding. Cys119 (proton donor) is an active-site residue. At Cys119 the chain carries 2-(S-cysteinyl)pyruvic acid O-phosphothioketal. UDP-N-acetyl-alpha-D-glucosamine contacts are provided by residues 124–128 (RPVDQ), Asp306, and Ile328.

The protein belongs to the EPSP synthase family. MurA subfamily.

The protein resides in the cytoplasm. The catalysed reaction is phosphoenolpyruvate + UDP-N-acetyl-alpha-D-glucosamine = UDP-N-acetyl-3-O-(1-carboxyvinyl)-alpha-D-glucosamine + phosphate. It participates in cell wall biogenesis; peptidoglycan biosynthesis. In terms of biological role, cell wall formation. Adds enolpyruvyl to UDP-N-acetylglucosamine. The sequence is that of UDP-N-acetylglucosamine 1-carboxyvinyltransferase from Thermus thermophilus (strain ATCC BAA-163 / DSM 7039 / HB27).